Consider the following 276-residue polypeptide: Large ribosomal subunit protein uL2 (276 aa).

The disordered stretch occupies residues 208–276 (KAGRNRHRGI…KLIISRRKGK (69 aa)). Positions 230–240 (DHPHGGGEGKK) are enriched in basic and acidic residues. The span at 255-276 (KGAKTRRKKASDKLIISRRKGK) shows a compositional bias: basic residues.

The protein belongs to the universal ribosomal protein uL2 family. In terms of assembly, part of the 50S ribosomal subunit. Forms a bridge to the 30S subunit in the 70S ribosome.

Functionally, one of the primary rRNA binding proteins. Required for association of the 30S and 50S subunits to form the 70S ribosome, for tRNA binding and peptide bond formation. It has been suggested to have peptidyltransferase activity; this is somewhat controversial. Makes several contacts with the 16S rRNA in the 70S ribosome. The chain is Large ribosomal subunit protein uL2 from Campylobacter lari (strain RM2100 / D67 / ATCC BAA-1060).